A 359-amino-acid polypeptide reads, in one-letter code: Biotin synthase (359 aa).

The region spanning His-47 to Arg-276 is the Radical SAM core domain. [4Fe-4S] cluster-binding residues include Cys-65, Cys-69, and Cys-72. Residues Cys-109, Cys-141, Cys-201, and Arg-271 each coordinate [2Fe-2S] cluster. The interval Glu-320–Gly-359 is disordered.

It belongs to the radical SAM superfamily. Biotin synthase family. As to quaternary structure, homodimer. [4Fe-4S] cluster serves as cofactor. It depends on [2Fe-2S] cluster as a cofactor.

It carries out the reaction (4R,5S)-dethiobiotin + (sulfur carrier)-SH + 2 reduced [2Fe-2S]-[ferredoxin] + 2 S-adenosyl-L-methionine = (sulfur carrier)-H + biotin + 2 5'-deoxyadenosine + 2 L-methionine + 2 oxidized [2Fe-2S]-[ferredoxin]. Its pathway is cofactor biosynthesis; biotin biosynthesis; biotin from 7,8-diaminononanoate: step 2/2. Functionally, catalyzes the conversion of dethiobiotin (DTB) to biotin by the insertion of a sulfur atom into dethiobiotin via a radical-based mechanism. This is Biotin synthase from Salinibacter ruber (strain DSM 13855 / M31).